A 522-amino-acid chain; its full sequence is Putative aldehyde dehydrogenase-like protein C21C3 (522 aa).

The Proton acceptor role is filled by Glu239. Cys273 acts as the Nucleophile in catalysis.

The protein belongs to the aldehyde dehydrogenase family.

It localises to the cytoplasm. The protein resides in the nucleus. The protein is Putative aldehyde dehydrogenase-like protein C21C3 of Schizosaccharomyces pombe (strain 972 / ATCC 24843) (Fission yeast).